The following is an 885-amino-acid chain: Alanine--tRNA ligase (885 aa).

Residues 426-444 (QEQKTRARQDRREKQRGGA) are compositionally biased toward basic and acidic residues. The tract at residues 426–445 (QEQKTRARQDRREKQRGGAE) is disordered. Zn(2+) contacts are provided by His568, His572, Cys671, and His675.

It belongs to the class-II aminoacyl-tRNA synthetase family. Requires Zn(2+) as cofactor.

It localises to the cytoplasm. It catalyses the reaction tRNA(Ala) + L-alanine + ATP = L-alanyl-tRNA(Ala) + AMP + diphosphate. In terms of biological role, catalyzes the attachment of alanine to tRNA(Ala) in a two-step reaction: alanine is first activated by ATP to form Ala-AMP and then transferred to the acceptor end of tRNA(Ala). Also edits incorrectly charged Ser-tRNA(Ala) and Gly-tRNA(Ala) via its editing domain. The polypeptide is Alanine--tRNA ligase (Chlorobium phaeovibrioides (strain DSM 265 / 1930) (Prosthecochloris vibrioformis (strain DSM 265))).